A 211-amino-acid chain; its full sequence is Large ribosomal subunit protein uL4 (211 aa).

The interval 42–73 is disordered; that stretch reads NNRQGTHSTKDRSEVRGGGIKPWAQKGTGRAR.

It belongs to the universal ribosomal protein uL4 family. As to quaternary structure, part of the 50S ribosomal subunit.

In terms of biological role, one of the primary rRNA binding proteins, this protein initially binds near the 5'-end of the 23S rRNA. It is important during the early stages of 50S assembly. It makes multiple contacts with different domains of the 23S rRNA in the assembled 50S subunit and ribosome. Its function is as follows. Forms part of the polypeptide exit tunnel. The protein is Large ribosomal subunit protein uL4 of Leptospira biflexa serovar Patoc (strain Patoc 1 / Ames).